Consider the following 172-residue polypeptide: Small ribosomal subunit protein uS5 (172 aa).

The S5 DRBM domain maps to 17–80 (LREKMISVNR…DEARRKMVKV (64 aa)).

Belongs to the universal ribosomal protein uS5 family. As to quaternary structure, part of the 30S ribosomal subunit. Contacts proteins S4 and S8.

With S4 and S12 plays an important role in translational accuracy. In terms of biological role, located at the back of the 30S subunit body where it stabilizes the conformation of the head with respect to the body. The polypeptide is Small ribosomal subunit protein uS5 (Cupriavidus taiwanensis (strain DSM 17343 / BCRC 17206 / CCUG 44338 / CIP 107171 / LMG 19424 / R1) (Ralstonia taiwanensis (strain LMG 19424))).